Here is a 206-residue protein sequence, read N- to C-terminus: Small ribosomal subunit protein uS4 (206 aa).

Residues 96-156 (TRLDNVVYRM…EKSRTQARIK (61 aa)) form the S4 RNA-binding domain.

It belongs to the universal ribosomal protein uS4 family. In terms of assembly, part of the 30S ribosomal subunit. Contacts protein S5. The interaction surface between S4 and S5 is involved in control of translational fidelity.

Functionally, one of the primary rRNA binding proteins, it binds directly to 16S rRNA where it nucleates assembly of the body of the 30S subunit. In terms of biological role, with S5 and S12 plays an important role in translational accuracy. The chain is Small ribosomal subunit protein uS4 from Shewanella denitrificans (strain OS217 / ATCC BAA-1090 / DSM 15013).